Reading from the N-terminus, the 2377-residue chain is DNA (cytosine-5-)-methyltransferase DMT5 (2377 aa).

The tract at residues 24–56 (GTADGAVNGGNIPNSQSQKRKRASPSPEIESEE) is disordered. Positions 62-126 (YEIDYIADSR…KNPGKPRLSP (65 aa)) constitute a Chromo; shadow subtype domain. The tract at residues 150–282 (GKSRAASSTD…KSSLPKAKLR (133 aa)) is disordered. The segment covering 201 to 213 (PTSKKVHPNKKCK) has biased composition (basic residues). Composition is skewed to acidic residues over residues 217-238 (DDES…DDND) and 245-263 (EDDE…ESDE). The span at 268-282 (PAKKTKSSLPKAKLR) shows a compositional bias: basic residues. The 407-residue stretch at 347–753 (LRVATMCSGT…IAALKVACHK (407 aa)) folds into the SAM-dependent MTase C5-type domain. Cys-440 is a catalytic residue. One can recognise a Helicase ATP-binding domain in the interval 1450–1771 (AERPVMVRGG…RSIATFMGIH (322 aa)). 1463 to 1470 (DQVGYGKT) is a binding site for ATP. 3 disordered regions span residues 1642–1680 (KGQA…ENSK), 2313–2334 (KGRG…TVKS), and 2347–2377 (SSFR…SDII). The segment covering 1645 to 1669 (AYRDKHDSDSKAKPITKEELERWEA) has biased composition (basic and acidic residues). Positions 2152-2315 (KLEHLVNLIH…EIPQEEYKGR (164 aa)) constitute a Helicase C-terminal domain. Polar residues predominate over residues 2317 to 2334 (SSISMTNEKRTPTLTVKS). A compositionally biased stretch (acidic residues) spans 2363-2377 (GVSDDDENSELSDII).

It in the N-terminal section; belongs to the class I-like SAM-binding methyltransferase superfamily. C5-methyltransferase family. In the C-terminal section; belongs to the SNF2/RAD54 helicase family. Interacts with SWI6. It depends on Mg(2+) as a cofactor.

The protein resides in the nucleus. Its subcellular location is the chromosome. The catalysed reaction is a 2'-deoxycytidine in DNA + S-adenosyl-L-methionine + ATP + H2O = a 5-methyl-2'-deoxycytidine in DNA + S-adenosyl-L-homocysteine + ADP + phosphate + 2 H(+). With respect to regulation, hemimethylated DNA substrates stimulate ATP hydrolysis and this is a prerequisite for methyltransferase activity. Its function is as follows. ATP-dependent cytosine methylase that maintains DNA methylation by acting at hemimethylated palindromic 5'-CG-3' sites to produce symmetrically methylated DNA strands. DNA methylation may play a role in transcriptional silencing, particularly at transposable elements. This chain is DNA (cytosine-5-)-methyltransferase DMT5, found in Cryptococcus neoformans var. grubii serotype A (strain H99 / ATCC 208821 / CBS 10515 / FGSC 9487) (Filobasidiella neoformans var. grubii).